The following is a 376-amino-acid chain: Beta sliding clamp (376 aa).

The protein belongs to the beta sliding clamp family. As to quaternary structure, forms a ring-shaped head-to-tail homodimer around DNA which binds and tethers DNA polymerases and other proteins to the DNA. The DNA replisome complex has a single clamp-loading complex (3 tau and 1 each of delta, delta', psi and chi subunits) which binds 3 Pol III cores (1 core on the leading strand and 2 on the lagging strand) each with a beta sliding clamp dimer. Additional proteins in the replisome are other copies of gamma, psi and chi, Ssb, DNA helicase and RNA primase.

The protein resides in the cytoplasm. Functionally, confers DNA tethering and processivity to DNA polymerases and other proteins. Acts as a clamp, forming a ring around DNA (a reaction catalyzed by the clamp-loading complex) which diffuses in an ATP-independent manner freely and bidirectionally along dsDNA. Initially characterized for its ability to contact the catalytic subunit of DNA polymerase III (Pol III), a complex, multichain enzyme responsible for most of the replicative synthesis in bacteria; Pol III exhibits 3'-5' exonuclease proofreading activity. The beta chain is required for initiation of replication as well as for processivity of DNA replication. In Streptomyces coelicolor (strain ATCC BAA-471 / A3(2) / M145), this protein is Beta sliding clamp (dnaN).